The following is a 347-amino-acid chain: Ubiquinone biosynthesis protein coq-4, mitochondrial (347 aa).

Residues 1–49 (MEVTALRRSAALVARASSQNAIRPAVCAAISSTSPTPPTQIQTQQTRQF) constitute a mitochondrion transit peptide. H185, D186, H189, and E201 together coordinate Zn(2+). The tract at residues 284-310 (IRKREREEKRRRKEMERMLSGRGTEDV) is disordered.

The protein belongs to the COQ4 family. In terms of assembly, component of a multi-subunit COQ enzyme complex, composed of at least coq-3, coq-4, coq-5, coq-6, coq-7 and coq-9. Requires Zn(2+) as cofactor.

Its subcellular location is the mitochondrion inner membrane. It carries out the reaction a 4-hydroxy-3-methoxy-5-(all-trans-polyprenyl)benzoate + H(+) = a 2-methoxy-6-(all-trans-polyprenyl)phenol + CO2. Its pathway is cofactor biosynthesis; ubiquinone biosynthesis. Lyase that catalyzes the C1-decarboxylation of 4-hydroxy-3-methoxy-5-(all-trans-polyprenyl)benzoic acid into 2-methoxy-6-(all-trans-polyprenyl)phenol during ubiquinone biosynthesis. This is Ubiquinone biosynthesis protein coq-4, mitochondrial from Neurospora crassa (strain ATCC 24698 / 74-OR23-1A / CBS 708.71 / DSM 1257 / FGSC 987).